The following is a 378-amino-acid chain: Erythronate-4-phosphate dehydrogenase (378 aa).

2 residues coordinate substrate: Ser45 and Thr66. Residues Asp146 and Thr175 each coordinate NAD(+). Residue Arg208 is part of the active site. Asp232 is an NAD(+) binding site. Glu237 is a catalytic residue. His254 (proton donor) is an active-site residue. Gly257 is an NAD(+) binding site. A substrate-binding site is contributed by Tyr258.

The protein belongs to the D-isomer specific 2-hydroxyacid dehydrogenase family. PdxB subfamily. As to quaternary structure, homodimer.

The protein resides in the cytoplasm. It catalyses the reaction 4-phospho-D-erythronate + NAD(+) = (R)-3-hydroxy-2-oxo-4-phosphooxybutanoate + NADH + H(+). It functions in the pathway cofactor biosynthesis; pyridoxine 5'-phosphate biosynthesis; pyridoxine 5'-phosphate from D-erythrose 4-phosphate: step 2/5. Functionally, catalyzes the oxidation of erythronate-4-phosphate to 3-hydroxy-2-oxo-4-phosphonooxybutanoate. In Escherichia coli O17:K52:H18 (strain UMN026 / ExPEC), this protein is Erythronate-4-phosphate dehydrogenase.